The following is a 102-amino-acid chain: Small ribosomal subunit protein uS10 (102 aa).

This sequence belongs to the universal ribosomal protein uS10 family. As to quaternary structure, part of the 30S ribosomal subunit.

In terms of biological role, involved in the binding of tRNA to the ribosomes. This chain is Small ribosomal subunit protein uS10, found in Clostridium botulinum (strain ATCC 19397 / Type A).